A 301-amino-acid polypeptide reads, in one-letter code: MKKNYYEMEVSSKNASELFKNFSFELGVEAIEEKENSFIIRDEEDLQNLEFAFIEFQKALQKKFNTKIDLQISKSIKENADWIEKYQKSVEPIEVGKFYVRPSWKESKKELIDIIIDPAIAFGSGHHESTNMCLKLIDKYAKDGATALDVGCGSGILSIALKKIGLKVAACDTDIQAVDASIKNAQKNGVKIDKIWNGSIADANLAIRNMDGEILSENLNENKNFNQSFNKEFDFVIANIITDVILILQNELKNSVKSGGILIISGILEKYKNKILNVFSDMNNLEILQNGEWVSFVFKKG.

S-adenosyl-L-methionine contacts are provided by Thr130, Gly151, Asp172, and Asn239.

This sequence belongs to the methyltransferase superfamily. PrmA family.

It localises to the cytoplasm. The catalysed reaction is L-lysyl-[protein] + 3 S-adenosyl-L-methionine = N(6),N(6),N(6)-trimethyl-L-lysyl-[protein] + 3 S-adenosyl-L-homocysteine + 3 H(+). In terms of biological role, methylates ribosomal protein L11. The sequence is that of Ribosomal protein L11 methyltransferase from Campylobacter hominis (strain ATCC BAA-381 / DSM 21671 / CCUG 45161 / LMG 19568 / NCTC 13146 / CH001A).